Consider the following 382-residue polypeptide: METHIKTVEFERPDMLSEAQSGASCVAHAWAKVPPVLSREERDELKARIKRLLKEREAVLVAHYYVDADLQDLAEETGGCVSDSLEMARFGRDHSAKTLIVAGVRFMGETAKILSPEKTVLMPDLDATCSLDLGCPPDEFAAFCDAHPDRTVVVYANTSAAVKARADWMVTSSIGLKIVQHLHAQGKKILWAPDRHLGSYIQKQTGADMLMWQGSCLVHDEFKGVELDLLRAEHPNAKILVHPESPESVVAQADVVGSTSQLIAAAQSLSAQEFIVATDNGILHKMRMAAPGKRFIEAPTAGNAATCKSCAHCPWMAMNALTNLAEVLETGRNEIHVDPAIGRQAVVCIDRMLDFAAREKATVRPQGDLAANAQLFQGIGPA.

Positions 63 and 84 each coordinate iminosuccinate. [4Fe-4S] cluster is bound at residue C129. Iminosuccinate-binding positions include 155–157 (YAN) and S172. Residue C216 coordinates [4Fe-4S] cluster. Iminosuccinate is bound by residues 242–244 (HPE) and T259. Residue C313 coordinates [4Fe-4S] cluster.

Belongs to the quinolinate synthase family. Type 1 subfamily. [4Fe-4S] cluster serves as cofactor.

The protein resides in the cytoplasm. The catalysed reaction is iminosuccinate + dihydroxyacetone phosphate = quinolinate + phosphate + 2 H2O + H(+). It participates in cofactor biosynthesis; NAD(+) biosynthesis; quinolinate from iminoaspartate: step 1/1. Functionally, catalyzes the condensation of iminoaspartate with dihydroxyacetone phosphate to form quinolinate. The chain is Quinolinate synthase from Ralstonia pickettii (strain 12J).